Here is a 380-residue protein sequence, read N- to C-terminus: Cytochrome b (380 aa).

4 helical membrane-spanning segments follow: residues 34-54 (FGSL…LLAM), 78-99 (WLIR…FLHI), 114-134 (WNTG…GYVL), and 179-199 (FFAL…VHLT). His84 and His98 together coordinate heme b. 2 residues coordinate heme b: His183 and His197. Position 202 (His202) interacts with a ubiquinone. 4 helical membrane passes run 227–247 (LKDI…ALFS), 289–309 (LGGV…PFLH), 321–341 (LSQT…WIGS), and 348–368 (FMII…ILFP).

Belongs to the cytochrome b family. In terms of assembly, the cytochrome bc1 complex contains 11 subunits: 3 respiratory subunits (MT-CYB, CYC1 and UQCRFS1), 2 core proteins (UQCRC1 and UQCRC2) and 6 low-molecular weight proteins (UQCRH/QCR6, UQCRB/QCR7, UQCRQ/QCR8, UQCR10/QCR9, UQCR11/QCR10 and a cleavage product of UQCRFS1). This cytochrome bc1 complex then forms a dimer. It depends on heme b as a cofactor.

The protein resides in the mitochondrion inner membrane. Functionally, component of the ubiquinol-cytochrome c reductase complex (complex III or cytochrome b-c1 complex) that is part of the mitochondrial respiratory chain. The b-c1 complex mediates electron transfer from ubiquinol to cytochrome c. Contributes to the generation of a proton gradient across the mitochondrial membrane that is then used for ATP synthesis. The chain is Cytochrome b (MT-CYB) from Gallus lafayettii (Sri Lanka junglefowl).